The chain runs to 753 residues: Transcription factor SOX-30 (753 aa).

Disordered regions lie at residues 1–45 (MERA…TLSA) and 140–161 (QELGPGLDPSVGPRGGVETGPR). Residues 7 to 22 (EPQPQQRPLRPAPPLL) are compositionally biased toward pro residues. Residues 337–405 (VKRPMNAFMV…KHREEFPGWV (69 aa)) constitute a DNA-binding region (HMG box). Disordered stretches follow at residues 514–540 (AGPSQTDTHQLHSEGTHTVKQPTPVSL) and 726–753 (PTSTPSSIQQVNVTDSDEEEEEKVLRDL). Composition is skewed to polar residues over residues 531–540 (TVKQPTPVSL) and 726–739 (PTSTPSSIQQVNVT).

As to quaternary structure, interacts with CTNNB1, competitively inhibiting CTNNB1-TCF7L2/TCF4 interaction.

The protein localises to the nucleus. The protein resides in the cytoplasm. Its function is as follows. Acts both as a transcriptional activator and a repressor. Binds to the DNA sequence 5'-ACAAT-3' and shows a preference for guanine residues surrounding this core motif. Binds to its own promoter and activates its own transcription. Required to activate the expression of postmeiotic genes involved in spermiogenesis. Binds to the promoter region of CTNNB1 and represses its transcription which leads to inhibition of Wnt signaling. Also inhibits Wnt signaling by binding to the CTNNB1 protein, preventing interaction of CTNNB1 with TCF7L2/TCF4. This chain is Transcription factor SOX-30 (SOX30), found in Macaca fascicularis (Crab-eating macaque).